A 580-amino-acid chain; its full sequence is F-box only protein 24 (580 aa).

The F-box domain maps to Pro-36 to Ile-82. The RCC1 repeat unit spans residues Gly-376 to Ser-425.

In terms of assembly, directly interacts with SKP1 and CUL1.

Its function is as follows. Substrate-recognition component of the SCF (SKP1-CUL1-F-box protein)-type E3 ubiquitin ligase complex. The protein is F-box only protein 24 (FBXO24) of Homo sapiens (Human).